The sequence spans 429 residues: 3-phosphoshikimate 1-carboxyvinyltransferase (429 aa).

3-phosphoshikimate contacts are provided by lysine 11, serine 12, and arginine 16. Lysine 11 serves as a coordination point for phosphoenolpyruvate. Residues glycine 82 and arginine 110 each coordinate phosphoenolpyruvate. The 3-phosphoshikimate site is built by serine 155, glutamine 157, aspartate 302, and lysine 329. Residue glutamine 157 coordinates phosphoenolpyruvate. Aspartate 302 serves as the catalytic Proton acceptor. Phosphoenolpyruvate contacts are provided by arginine 333 and arginine 385.

It belongs to the EPSP synthase family. In terms of assembly, monomer.

The protein resides in the cytoplasm. It carries out the reaction 3-phosphoshikimate + phosphoenolpyruvate = 5-O-(1-carboxyvinyl)-3-phosphoshikimate + phosphate. It participates in metabolic intermediate biosynthesis; chorismate biosynthesis; chorismate from D-erythrose 4-phosphate and phosphoenolpyruvate: step 6/7. Catalyzes the transfer of the enolpyruvyl moiety of phosphoenolpyruvate (PEP) to the 5-hydroxyl of shikimate-3-phosphate (S3P) to produce enolpyruvyl shikimate-3-phosphate and inorganic phosphate. This Helicobacter pylori (strain G27) protein is 3-phosphoshikimate 1-carboxyvinyltransferase.